A 325-amino-acid polypeptide reads, in one-letter code: uncharacterized protein (325 aa).

The segment at Met-1 to Gln-75 is disordered. Residues Tyr-24 to Tyr-70 are compositionally biased toward pro residues. 4 consecutive transmembrane segments (helical) span residues Ala-96–Ala-116, Ile-153–Ile-173, Leu-205–Phe-225, and Leu-273–Ile-293.

The protein to M.tuberculosis Rv2560.

Its subcellular location is the cell membrane. This is an uncharacterized protein from Mycobacterium bovis (strain ATCC BAA-935 / AF2122/97).